The sequence spans 55 residues: Large ribosomal subunit protein bL32 (55 aa).

It belongs to the bacterial ribosomal protein bL32 family.

This chain is Large ribosomal subunit protein bL32, found in Aeromonas hydrophila subsp. hydrophila (strain ATCC 7966 / DSM 30187 / BCRC 13018 / CCUG 14551 / JCM 1027 / KCTC 2358 / NCIMB 9240 / NCTC 8049).